An 89-amino-acid chain; its full sequence is Small ribosomal subunit protein uS15 (89 aa).

The interval 1-23 (MSLDTTEKQQLINANQTHGTDTG) is disordered. Over residues 8–23 (KQQLINANQTHGTDTG) the composition is skewed to polar residues.

This sequence belongs to the universal ribosomal protein uS15 family. In terms of assembly, part of the 30S ribosomal subunit. Forms a bridge to the 50S subunit in the 70S ribosome, contacting the 23S rRNA.

Its function is as follows. One of the primary rRNA binding proteins, it binds directly to 16S rRNA where it helps nucleate assembly of the platform of the 30S subunit by binding and bridging several RNA helices of the 16S rRNA. Forms an intersubunit bridge (bridge B4) with the 23S rRNA of the 50S subunit in the ribosome. The chain is Small ribosomal subunit protein uS15 from Prochlorococcus marinus (strain MIT 9313).